Consider the following 631-residue polypeptide: MPTTFQEIPRERPVTPLLDRADTPAGLRRLAEADLETLADELRQELLYTVGQTGGHFGAGLGVIELTIALHYVFDTPDDRLVWDVGHQAYPHKILTGRRNRMLSLRQKDGIAAFPRRSESEYDTFGVGHSSTSISAALGMAIAARLQNSARKSIAVIGDGALTAGMAFEALNHAQEVNADMLVILNDNDMSISRNVGGLSNYLAKILSSRTYASMREGSKKVLSRLPGAWEIARRTEEYAKGMLVPGTLFEELGWNYIGPIDGHDLPTMIATLRNMRDLKGPQFLHVVTKKGKGFAPAEIDPIGYHAITKLEPADKPAAPKKASGPKYSAVFGQWLCDMAAADNRLVGITPAMKEGSDLVDFSERYPERYFDVAIAEQHAVTLAAGMACEGSKPVVAIYSTFLQRAYDQLIHDVAVQNLDVLFAIDRAGLVGEDGPTHAGSYDLSYLRCIPGMLVMTPSDENELRKMLSTGHLYNGPAAVRYPRGTGPNAPISGDLQPLEIGKGVVRRQGEKVALLVFGVQLAEAMQVAEQINATVVDMRFVKPLDEALVLELAGSHELLVTIEENAIMGGAGAAVGEFLASQAVLKPLLHLGLPDIYVEHAKPAQMLAECGLDAAGIEASVKARMVKLGL.

Thiamine diphosphate is bound by residues histidine 87 and 128 to 130 (GHS). Aspartate 159 is a Mg(2+) binding site. Thiamine diphosphate is bound by residues 160–161 (GA), asparagine 188, phenylalanine 295, and glutamate 377. Mg(2+) is bound at residue asparagine 188.

Belongs to the transketolase family. DXPS subfamily. Homodimer. Mg(2+) serves as cofactor. It depends on thiamine diphosphate as a cofactor.

It carries out the reaction D-glyceraldehyde 3-phosphate + pyruvate + H(+) = 1-deoxy-D-xylulose 5-phosphate + CO2. The protein operates within metabolic intermediate biosynthesis; 1-deoxy-D-xylulose 5-phosphate biosynthesis; 1-deoxy-D-xylulose 5-phosphate from D-glyceraldehyde 3-phosphate and pyruvate: step 1/1. In terms of biological role, catalyzes the acyloin condensation reaction between C atoms 2 and 3 of pyruvate and glyceraldehyde 3-phosphate to yield 1-deoxy-D-xylulose-5-phosphate (DXP). The protein is 1-deoxy-D-xylulose-5-phosphate synthase of Pseudomonas putida (strain ATCC 700007 / DSM 6899 / JCM 31910 / BCRC 17059 / LMG 24140 / F1).